The following is a 249-amino-acid chain: Voltage-gated potassium channel subunit beta-3 (249 aa).

Positions 44, 74, 75, 100, 129, 130, 131, 132, 133, 134, 140, 150, 209, 211, 215, and 218 each coordinate NADP(+).

The protein belongs to the shaker potassium channel beta subunit family. As to quaternary structure, forms heteromultimeric complex with alpha subunits. Interacts with KCNA5 and KCNB2. As to expression, strong expression in brain, with highest levels in neocortical and allocortical regions, hippocampus, olfactory bulb and cerebellum. Also strong in kidney. Weak expression in lung, skeletal muscle and heart.

It localises to the cytoplasm. Regulatory subunit of the voltage-gated potassium (Kv) channels composed of pore-forming and potassium-conducting alpha subunits and of regulatory beta subunit. The beta-3/KCNAB3 subunit may mediate closure of potassium channels. Enhances the expression of Kv2.2/KCNB2 alpha subunit-containing Kv channels but not Kv2.1/KCNB1. May display nicotinamide adenine dinucleotide phosphate (NADPH)-dependent aldoketoreductase activity. The binding of oxidized and reduced NADP(H) cofactors may be required for the regulation of potassium channel activity. The protein is Voltage-gated potassium channel subunit beta-3 of Mus musculus (Mouse).